The primary structure comprises 457 residues: MDHLPIFCQLRDRDCLIVGGGDVAERKARLLLDAGARLTVNALAFIPQFTAWADAGMLTLVEGPFDESLLDTCWLAIAATDDDALNQRVSEAAESRRIFCNVVDAPKAASFIMPSIIDRSPLMVAVSSGGTSPVLARLLREKLESLLPLHLGQVAKYAGQLRGRVKQQFATMGERRRFWEKLFVNDRLAQSLANNDQKAITETTEQLINEPLDHRGEVVLVGAGPGDAGLLTLKGLQQIQQADVVVYDRLVSDDIMNLVRRDADRVFVGKRAGYHCVPQEEINQILLREAQKGKRVVRLKGGDPFIFGRGGEELETLCNAGIPFSVVPGITAASGCSAYSGIPLTHRDYAQSVRLITGHLKTGGELDWENLAAEKQTLVFYMGLNQAATIQQKLIEYGMPGEMPVAIVENGTAVTQRVIDGTLTQLGELAQQMNSPSLIIIGRVVGLRDKLNWFSNH.

The interval 1 to 204 (MDHLPIFCQL…NDQKAITETT (204 aa)) is precorrin-2 dehydrogenase /sirohydrochlorin ferrochelatase. Residues 22–23 (DV) and 43–44 (LA) each bind NAD(+). S128 carries the phosphoserine modification. A uroporphyrinogen-III C-methyltransferase region spans residues 216–457 (GEVVLVGAGP…RDKLNWFSNH (242 aa)). P225 contacts S-adenosyl-L-methionine. The active-site Proton acceptor is D248. Catalysis depends on K270, which acts as the Proton donor. Residues 301–303 (GGD), I306, 331–332 (TA), M382, and G411 each bind S-adenosyl-L-methionine.

In the N-terminal section; belongs to the precorrin-2 dehydrogenase / sirohydrochlorin ferrochelatase family. The protein in the C-terminal section; belongs to the precorrin methyltransferase family.

It carries out the reaction uroporphyrinogen III + 2 S-adenosyl-L-methionine = precorrin-2 + 2 S-adenosyl-L-homocysteine + H(+). The enzyme catalyses precorrin-2 + NAD(+) = sirohydrochlorin + NADH + 2 H(+). The catalysed reaction is siroheme + 2 H(+) = sirohydrochlorin + Fe(2+). It participates in cofactor biosynthesis; adenosylcobalamin biosynthesis; precorrin-2 from uroporphyrinogen III: step 1/1. It functions in the pathway cofactor biosynthesis; adenosylcobalamin biosynthesis; sirohydrochlorin from precorrin-2: step 1/1. The protein operates within porphyrin-containing compound metabolism; siroheme biosynthesis; precorrin-2 from uroporphyrinogen III: step 1/1. Its pathway is porphyrin-containing compound metabolism; siroheme biosynthesis; siroheme from sirohydrochlorin: step 1/1. It participates in porphyrin-containing compound metabolism; siroheme biosynthesis; sirohydrochlorin from precorrin-2: step 1/1. Multifunctional enzyme that catalyzes the SAM-dependent methylations of uroporphyrinogen III at position C-2 and C-7 to form precorrin-2 via precorrin-1. Then it catalyzes the NAD-dependent ring dehydrogenation of precorrin-2 to yield sirohydrochlorin. Finally, it catalyzes the ferrochelation of sirohydrochlorin to yield siroheme. This chain is Siroheme synthase, found in Escherichia coli O6:K15:H31 (strain 536 / UPEC).